The primary structure comprises 384 residues: Protein V (384 aa).

Disordered stretches follow at residues 1 to 23 (MDQD…GGRE) and 38 to 317 (SEPT…TKKG). A compositionally biased stretch (basic and acidic residues) spans 7–20 (ILKEDSEVEREAPG). A compositionally biased stretch (polar residues) spans 50-59 (LHNTINTPQG). S68 bears the Phosphoserine; by host mark. Basic and acidic residues predominate over residues 83 to 101 (RSGEESRVSGRTSKPEAEA). Residue S125 is modified to Phosphoserine; by host. Positions 150-168 (GIEDENREMAAHPDKRGED) are enriched in basic and acidic residues. The segment covering 191–206 (ASNNGRSMEPGSSHSA) has biased composition (polar residues). Residues S192, S249, S257, and S260 each carry the phosphoserine; by host modification. Zn(2+) is bound by residues H318, C337, C341, C353, C355, C358, C362, and C365.

It belongs to the paramyxoviruses V protein family. In terms of assembly, interacts with host IFIH1/MDA5 and DHX58/LGP2. Interacts with host IRF3. Interacts with host RIGI regulatory protein (via CARDs domain) and host TRIM25 (via SPRY domain); these interactions prevent TRIM25-mediated ubiquitination of RIG-I and disrupts downstream RIG-I signaling.

The protein localises to the host cytoplasm. In terms of biological role, plays an essential role in the inhibition of host immune response. Prevents the establishment of cellular antiviral state by blocking interferon-alpha/beta (IFN-alpha/beta) production and signaling pathway. Interacts with host IFIH1/MDA5 and DHX58/LGP2 to inhibit the transduction pathway involved in the activation of IFN-beta promoter, thus protecting the virus against cell antiviral state. Also interacts with and inhibits host IRF3. Blocks the type I interferon signaling pathway by disrupting the RIG-I signaling pathway. The sequence is that of Protein V (P/V/C) from Sendai virus (strain Z) (SeV).